A 313-amino-acid polypeptide reads, in one-letter code: Ornithine carbamoyltransferase (313 aa).

Residues 57 to 60 (STRT), Q84, R108, and 135 to 138 (HPTQ) each bind carbamoyl phosphate. L-ornithine-binding positions include N167, D231, and 235–236 (SM). Residues 272–273 (CL) and R300 contribute to the carbamoyl phosphate site.

Belongs to the aspartate/ornithine carbamoyltransferase superfamily. OTCase family.

It localises to the cytoplasm. It catalyses the reaction carbamoyl phosphate + L-ornithine = L-citrulline + phosphate + H(+). The protein operates within amino-acid biosynthesis; L-arginine biosynthesis; L-arginine from L-ornithine and carbamoyl phosphate: step 1/3. Functionally, reversibly catalyzes the transfer of the carbamoyl group from carbamoyl phosphate (CP) to the N(epsilon) atom of ornithine (ORN) to produce L-citrulline. This is Ornithine carbamoyltransferase from Caldanaerobacter subterraneus subsp. tengcongensis (strain DSM 15242 / JCM 11007 / NBRC 100824 / MB4) (Thermoanaerobacter tengcongensis).